Reading from the N-terminus, the 353-residue chain is Carbamoyl phosphate synthase small chain (353 aa).

The segment at 1–166 (MSDAYLALET…AETHGNGDTT (166 aa)) is CPSase. Positions 45, 214, and 216 each coordinate L-glutamine. Residues 166-349 (TVALVDCGAK…LAMADASYTP (184 aa)) enclose the Glutamine amidotransferase type-1 domain. Cys241 acts as the Nucleophile in catalysis. L-glutamine-binding residues include Leu242, Gln245, Asn283, Gly285, and Tyr286. Catalysis depends on residues His322 and Glu324.

Belongs to the CarA family. Composed of two chains; the small (or glutamine) chain promotes the hydrolysis of glutamine to ammonia, which is used by the large (or ammonia) chain to synthesize carbamoyl phosphate. Tetramer of heterodimers (alpha,beta)4.

The enzyme catalyses hydrogencarbonate + L-glutamine + 2 ATP + H2O = carbamoyl phosphate + L-glutamate + 2 ADP + phosphate + 2 H(+). It catalyses the reaction L-glutamine + H2O = L-glutamate + NH4(+). It functions in the pathway amino-acid biosynthesis; L-arginine biosynthesis; carbamoyl phosphate from bicarbonate: step 1/1. The protein operates within pyrimidine metabolism; UMP biosynthesis via de novo pathway; (S)-dihydroorotate from bicarbonate: step 1/3. Its function is as follows. Small subunit of the glutamine-dependent carbamoyl phosphate synthetase (CPSase). CPSase catalyzes the formation of carbamoyl phosphate from the ammonia moiety of glutamine, carbonate, and phosphate donated by ATP, constituting the first step of 2 biosynthetic pathways, one leading to arginine and/or urea and the other to pyrimidine nucleotides. The small subunit (glutamine amidotransferase) binds and cleaves glutamine to supply the large subunit with the substrate ammonia. This Halobacterium salinarum (strain ATCC 29341 / DSM 671 / R1) protein is Carbamoyl phosphate synthase small chain.